The chain runs to 128 residues: Probable heavy metal-dependent transcriptional regulator HI_0293 (128 aa).

In terms of domain architecture, HTH merR-type spans 1–69 (MNISEAAKLV…LHQIAQLLAL (69 aa)). Positions 4–23 (SEAAKLVGLSTKQIRDYEKM) form a DNA-binding region, H-T-H motif.

Its subcellular location is the cytoplasm. In terms of biological role, could be a copper-dependent transcriptional activator of the ATPase HI_0290. This chain is Probable heavy metal-dependent transcriptional regulator HI_0293, found in Haemophilus influenzae (strain ATCC 51907 / DSM 11121 / KW20 / Rd).